The following is a 606-amino-acid chain: Chaperone protein DnaK (606 aa).

At Thr174 the chain carries Phosphothreonine; by autocatalysis. A compositionally biased stretch (polar residues) spans 579–593; sequence ASAAGNPGQGQTNEN. The segment at 579-606 is disordered; sequence ASAAGNPGQGQTNENPGGKTIDGDYKVN.

Belongs to the heat shock protein 70 family.

Its function is as follows. Acts as a chaperone. The sequence is that of Chaperone protein DnaK from Dictyoglomus thermophilum (strain ATCC 35947 / DSM 3960 / H-6-12).